Here is an 83-residue protein sequence, read N- to C-terminus: Small ribosomal subunit protein eS21 (83 aa).

Methionine 1 carries the N-acetylmethionine modification. Lysine 41 is covalently cross-linked (Glycyl lysine isopeptide (Lys-Gly) (interchain with G-Cter in SUMO2)). Position 81 is an N6-acetyllysine (lysine 81).

This sequence belongs to the eukaryotic ribosomal protein eS21 family. In terms of assembly, component of the 40S small ribosomal subunit.

The protein localises to the cytoplasm. It is found in the cytosol. Its subcellular location is the rough endoplasmic reticulum. Component of the small ribosomal subunit. The ribosome is a large ribonucleoprotein complex responsible for the synthesis of proteins in the cell. The chain is Small ribosomal subunit protein eS21 (RPS21) from Sus scrofa (Pig).